The sequence spans 742 residues: MSSAAASATAGSVTGKTPRILACVLCQHRKIKCDRSFPCANCQRANVQCTPSTPAPARKRRRPNQDLQERLARCEELLKEYAPDGKPDIARLTTKRSSLSQSPPKGEEPLPEWNRHGKLIHEDGSVRFVDSYMLSTIYDELRAMRDIIDHDESTPEDESSDYMTPDTNADLLFGGDTPQPAGNSMELQPSPGHIFRLWQVFLDRVNPLIKLVHVPSLQPYFVEATAGAPLPKNIEALLFSIYTLAAVSLSDAECTSILGYGREAALHRFSSGVRASLIRIGFLKTHDLTTLQALVHYLISLQGRYNRHAAWVLNGVVIRIAQKMGIHRDGTMLGLPPFETEMRRRLWFQILSMEFKTALMSGLGHSLLPRVWDTQEPKNVNDADLHPSATEPVKDREGPTEMIFVLITNKVARFIVESPGIEPIFLYHDEKVKKIPGAPSEEKIKEFRGLIDGLSKSLLELTDKYCDPAAGPLHQYTIEFQDIIMQRIRESLEPGDATIETHIDHMFKMAVESFESTVVSYRNSCKVAYLWFLRLQFHNDLFTFLAGQLSQRPSGPLVDRAWETVENILPYHPELLKVNASKENLLLASLLVKGWNMREEYCSTQMGITLNTPPYIEHLRSVVPQDYVKSENSSPSALSRIPKANRMVTREAASDQLSVSGPMDPTFDEFIGNYLDGADWDVFSRINLENPAFPGVPATGITPQVNATASDILPSTRIDHTDPNQTSHQFAMYGIDPQSAWQ.

A DNA-binding region (zn(2)-C6 fungal-type) is located at residues 23-49; that stretch reads CVLCQHRKIKCDRSFPCANCQRANVQC. The interval 85–116 is disordered; that stretch reads GKPDIARLTTKRSSLSQSPPKGEEPLPEWNRH. Basic and acidic residues predominate over residues 105 to 116; it reads KGEEPLPEWNRH.

It is found in the nucleus. Functionally, transcriptional regulator; part of the gene cluster that mediates the biosynthesis of pyriculol and pyriculariol, two heptaketides that induce lesion formation upon application on rice leaves but are dispensable for pathogenicity. With TRF2, negatively regulates the expression of the gene cluster and the subsequent pyriculol and pyriculariol production. In Pyricularia oryzae (strain 70-15 / ATCC MYA-4617 / FGSC 8958) (Rice blast fungus), this protein is Pyriculol/pyriculariol biosynthesis cluster transcription factor 1.